The following is a 395-amino-acid chain: MKRLFTSESVTEGHPDKVADQISDAILDAMLEQDPKSRVAVETLVTTGIAIVSGEVTTRAYVDIQDIVRKTILDIGYTRAKYGFDGETCAVLSSIHSQSPDIALGVDKALEAKEGELIAEDELEQVGAGDQGMMFGYATNETKEYMPLPIMLSHKLAMKLSEVRKNGTLPFLRPDGKTQVTIEYDENDKPVRVDTVLISTQHEPDVTISEIKEALIKHVIDPIIPEELRDDKMKILVNPTGRFVLGGPSADTGLTGRKIIVDTYGGAVPHGGGAFSGKDPTKVDRSAHYFARYVAKNVVAAGLADKFMIQVAYAIGKAQPVSVMINTFGTAKTDEDKILKAILEIFDFRPGAIIKKLDLLRPIYKKTAAYGHFGRELEEFTWEKLDMVNELKKIL.

Histidine 14 contributes to the ATP binding site. Aspartate 16 serves as a coordination point for Mg(2+). Glutamate 42 is a binding site for K(+). L-methionine-binding residues include glutamate 55 and glutamine 98. The interval glutamine 98 to lysine 108 is flexible loop. Residues aspartate 175–lysine 177, arginine 242–phenylalanine 243, aspartate 251, arginine 257–lysine 258, alanine 274, and lysine 278 each bind ATP. L-methionine is bound at residue aspartate 251. Lysine 282 is a binding site for L-methionine.

It belongs to the AdoMet synthase family. As to quaternary structure, homotetramer; dimer of dimers. Mg(2+) is required as a cofactor. K(+) serves as cofactor.

The protein resides in the cytoplasm. The catalysed reaction is L-methionine + ATP + H2O = S-adenosyl-L-methionine + phosphate + diphosphate. It participates in amino-acid biosynthesis; S-adenosyl-L-methionine biosynthesis; S-adenosyl-L-methionine from L-methionine: step 1/1. Functionally, catalyzes the formation of S-adenosylmethionine (AdoMet) from methionine and ATP. The overall synthetic reaction is composed of two sequential steps, AdoMet formation and the subsequent tripolyphosphate hydrolysis which occurs prior to release of AdoMet from the enzyme. This chain is S-adenosylmethionine synthase, found in Thermosipho africanus (strain TCF52B).